A 98-amino-acid polypeptide reads, in one-letter code: Hainantoxin-XVII (98 aa).

Residues 1–40 (MTTVGVSLFRRSPEKITMKIATFLGLSFLLIASYVLICEA) form the signal peptide. The propeptide occupies 41–64 (QHPGFQELLILEENMRDPENSKER). Cystine bridges form between Cys66/Cys81, Cys73/Cys85, and Cys80/Cys95.

This sequence belongs to the hainantoxin family. 17 subfamily. Expressed by the venom gland.

The protein resides in the secreted. Functionally, putative ion channel inhibitor. This chain is Hainantoxin-XVII, found in Cyriopagopus hainanus (Chinese bird spider).